A 444-amino-acid polypeptide reads, in one-letter code: Tol-Pal system protein TolB (444 aa).

An N-terminal signal peptide occupies residues 1 to 26 (MTLFRTLAPMGLALALLLPAAVPAAA). Positions 281 to 310 (IYTLDTGSGTRRQLTNSPSIETAPSYSPDG) are enriched in polar residues. Residues 281–311 (IYTLDTGSGTRRQLTNSPSIETAPSYSPDGS) are disordered.

Belongs to the TolB family. As to quaternary structure, the Tol-Pal system is composed of five core proteins: the inner membrane proteins TolA, TolQ and TolR, the periplasmic protein TolB and the outer membrane protein Pal. They form a network linking the inner and outer membranes and the peptidoglycan layer.

It is found in the periplasm. Part of the Tol-Pal system, which plays a role in outer membrane invagination during cell division and is important for maintaining outer membrane integrity. The sequence is that of Tol-Pal system protein TolB from Cereibacter sphaeroides (strain ATCC 17029 / ATH 2.4.9) (Rhodobacter sphaeroides).